The sequence spans 269 residues: Staphylococcal secretory antigen ssaA2 (269 aa).

An N-terminal signal peptide occupies residues 1–27 (MKKIATATIATAGFATIAIASGNQAHA). A run of 7 repeats spans residues 83-85 (YNN), 88-90 (YNN), 91-93 (YNN), 97-99 (YNN), 103-105 (YNN), 106-108 (YSN), and 115-117 (YNN). Residues 83–115 (YNNYSYNNYNNGYSYNNYSRYNNYSNNNQSYNY) form a 7 X 3 AA repeats of Y-[NS]-N region. The Peptidase C51 domain occupies 148-269 (MAPSSNGRSI…SQAAGYNFIH (122 aa)).

Its subcellular location is the secreted. Not known; immunogenic protein. This chain is Staphylococcal secretory antigen ssaA2 (ssaA2), found in Staphylococcus aureus (strain MRSA252).